The chain runs to 939 residues: Dynamin-like GTPase MGM1, mitochondrial (939 aa).

A mitochondrion-targeting transit peptide spans 1-27; sequence MSAQLRAAAAITPAARRVISGPAAVRR. The helical transmembrane segment at 85 to 103 threads the bilayer; it reads FIRVPALFGGMMLGAVGWV. The span at 170 to 183 shows a compositional bias: gly residues; it reads AGEGSGSGEGGPNG. Residues 170 to 196 form a disordered region; sequence AGEGSGSGEGGPNGGPEPPRQSRAGAA. The region spanning 249–522 is the Dynamin-type G domain; that stretch reads TVTLPSIVVI…LEQQMSSKLN (274 aa). The tract at residues 259–266 is G1 motif; sequence GSQSSGKS. Residues Ser262, Gly264, Lys265, Ser266, Ser267, and Gly281 each contribute to the GTP site. Residue Ser266 participates in Mg(2+) binding. The segment at 285–287 is G2 motif; it reads ITR. Positions 286 and 359 each coordinate Mg(2+). The segment at 359 to 362 is G3 motif; the sequence is DLPG. A G4 motif region spans residues 427-430; the sequence is TKMD. GTP contacts are provided by Lys428, Asp430, and Ser457. Residues 456–459 form a G5 motif region; the sequence is ISKL. Residues 549–703 are stalk region; the sequence is SAESYLAASL…TSDGIEISLK (155 aa). Residues 710–809 form a paddle region region; that stretch reads DIQPNEWAQG…LSLRIQAAKS (100 aa). Residues 810-877 form a stalk region region; the sequence is RQCKTLTNKY…GGGLEKFARE (68 aa). A disulfide bridge links Cys812 with Cys821. Residues 815-909 enclose the GED domain; it reads LTNKYYCPEV…KIEELHRISS (95 aa).

The protein belongs to the TRAFAC class dynamin-like GTPase superfamily. Dynamin/Fzo/YdjA family. In terms of assembly, oligomeric complex consisting of membrane-bound and soluble forms of MGM1. Post-translationally, cleavage of the transit peptide by mitochondrial processing protease (MPP) produces a long integral membrane form of MGM1 (L-MGM1). Further processing by the rhomboid protease PCP1 produces a short peripheral membrane form of MGM1 (S-MGM1). Both forms are required for full activity.

The protein resides in the mitochondrion inner membrane. The protein localises to the mitochondrion intermembrane space. The enzyme catalyses GTP + H2O = GDP + phosphate + H(+). Functionally, dynamin-related GTPase that is essential for normal mitochondrial morphology by mediating fusion of the mitochondrial inner membranes, regulating cristae morphology and maintaining respiratory chain function. Exists in two forms: the transmembrane, long form (Dynamin-like GTPase MGM1, long form; L-MGM1), which is tethered to the inner mitochondrial membrane, and the short soluble form (Dynamin-like GTPase MGM1, short form; S-MGM1), which results from proteolytic cleavage and localizes in the intermembrane space. Both forms (L-MGM1 and S-MGM1) cooperate to catalyze the fusion of the mitochondrial inner membrane. The equilibrium between L-MGM1 and S-MGM1 is essential: excess levels of S-MGM1, following loss of mitochondrial membrane potential, lead to an impaired equilibrium between L-MGM1 and S-MGM1, inhibiting mitochondrial fusion. Plays a role in the maintenance and remodeling of mitochondrial cristae, some invaginations of the mitochondrial inner membrane that provide an increase in the surface area. Probably acts by forming helical filaments at the inside of inner membrane tubes with the shape and dimensions of crista junctions. Constitutes the transmembrane long form (L-MGM1) that plays a central role in mitochondrial inner membrane fusion and cristae morphology. L-MGM1 and the soluble short form (S-MGM1) form higher-order helical assemblies that coordinate the fusion of mitochondrial inner membranes. Inner membrane-anchored L-MGM1 molecules initiate membrane remodeling by recruiting soluble S-MGM1 to rapidly polymerize into a flexible cylindrical scaffold encaging the mitochondrial inner membrane. Once at the membrane surface, the formation of S-MGM1 helices induce bilayer curvature. MGM1 dimerization through the paddle region, which inserts into cardiolipin-containing membrane, promotes GTP hydrolysis and the helical assembly of a flexible MGM1 lattice on the membrane, which drives membrane curvature and mitochondrial fusion. Its function is as follows. Constitutes the soluble short form (S-MGM1) generated by cleavage by PCP1, which plays a central role in mitochondrial inner membrane fusion and cristae morphology. The transmembrane long form (L-MGM1) and the S-MGM1 form higher-order helical assemblies that coordinate the fusion of mitochondrial inner membranes. Inner membrane-anchored L-MGM1 molecules initiate membrane remodeling by recruiting soluble S-MGM1 to rapidly polymerize into a flexible cylindrical scaffold encaging the mitochondrial inner membrane. Once at the membrane surface, the formation of S-MGM1 helices induce bilayer curvature. MGM1 dimerization through the paddle region, which inserts into cardiolipin-containing membrane, promotes GTP hydrolysis and the helical assembly of a flexible MGM1 lattice on the membrane, which drives membrane curvature and mitochondrial fusion. Excess levels of S-MGM1 produced by cleavage by PCP1 following stress conditions that induce loss of mitochondrial membrane potential, lead to an impaired equilibrium between L-MGM1 and S-MGM1, thereby inhibiting mitochondrial fusion. This chain is Dynamin-like GTPase MGM1, mitochondrial, found in Chaetomium thermophilum (strain DSM 1495 / CBS 144.50 / IMI 039719) (Thermochaetoides thermophila).